The following is a 398-amino-acid chain: Chalcone synthase (398 aa).

Residue Cys169 is part of the active site.

Belongs to the thiolase-like superfamily. Chalcone/stilbene synthases family.

The enzyme catalyses (E)-4-coumaroyl-CoA + 3 malonyl-CoA + 3 H(+) = 2',4,4',6'-tetrahydroxychalcone + 3 CO2 + 4 CoA. It functions in the pathway secondary metabolite biosynthesis; flavonoid biosynthesis. The primary product of this enzyme is 4,2',4',6'-tetrahydroxychalcone (also termed naringenin-chalcone or chalcone) which can under specific conditions spontaneously isomerize into naringenin. The sequence is that of Chalcone synthase (CHS) from Petroselinum crispum (Parsley).